Reading from the N-terminus, the 729-residue chain is Serine/threonine-protein kinase TBK1 (729 aa).

The region spanning 9–310 (WLLSDILGQG…ETSDILHRMV (302 aa)) is the Protein kinase domain. 15–23 (LGQGATANV) is a binding site for ATP. A Glycyl lysine isopeptide (Lys-Gly) (interchain with G-Cter in ubiquitin) cross-link involves residue Lys30. ATP is bound at residue Lys38. The Proton acceptor role is filled by Asp135. Ser172 is modified (phosphoserine; by autocatalysis and IKKB). Positions 309-385 (MVIHVFSLQQ…ENPIFVVSRE (77 aa)) constitute a Ubiquitin-like domain. Lys401 is covalently cross-linked (Glycyl lysine isopeptide (Lys-Gly) (interchain with G-Cter in ubiquitin)). 2 coiled-coil regions span residues 407–657 (DLDG…LQET) and 658–713 (LPQK…ILER). The residue at position 607 (Lys607) is an N6-methyllysine; by SETD4. The tract at residues 621-729 (RKMLHLRKQL…DGGLRNVDCL (109 aa)) is interaction with AZI2, TANK and TBKBP1. Residue Lys670 forms a Glycyl lysine isopeptide (Lys-Gly) (interchain with G-Cter in ubiquitin) linkage. Phosphoserine is present on Ser716.

It belongs to the protein kinase superfamily. Ser/Thr protein kinase family. I-kappa-B kinase subfamily. As to quaternary structure, homodimer. Interacts with DDX3X, TIRAP and TRAF2. Part of a ternary complex consisting of TANK, TRAF2 and TBK1. Interacts with AZI2, TANK and TBKBP1; these interactions are mutually exclusive and mediate TBK1 activation. Interacts with GSK3B; this interaction promotes TBK1 self-association and autophosphorylation. Interacts with SIKE1; SIKE1 is associated with TBK1 under physiological condition and dissociated from TBK1 upon viral infection or TLR3 stimulation. Interacts with IRF3, leading to IRF3 phosphorylation. Interacts with RIGI. Interacts with CYLD. Interacts with OPTN and TRAF3. Interacts with SRC. Interacts with the exocyst complex subunit SEC5/EXOC2; this interaction is sufficient to trigger TBK1 activity. Interacts with STING1, leading to STING1 phosphorylation. Interacts with IFIT3 (via N-terminus). Interacts with MAVS; interaction only takes place in the presence of IFIT3 and leads to MAVS phosphorylation. Interacts (via protein kinase domain) with TTLL12 (via TTL domain); the interaction prevents MAVS binding to TBK1. Interacts with TICAM1; this interaction is enhanced in the presence of WDFY1 and leads to TICAM1 phosphorylation. Interacts with TRIM26. Interacts with TRIM23. Interacts with TTC4 and IKBKE. Interacts with HNRNPA2B1. Interacts with DDX3X. Interacts with TRIM14. Interacts with CEP170; efficient complex formation may be dependent on the presence of CCDC61. Interacts with TRAF3IP3. Interacts with HSP90AA1; the interaction mediates TBK1 association with TOMM70. Interacts with TAX1BP1. Interacts with kinase IKBKB; the complex interacts with STAT1, leading to phosphorylation of STAT1 on 'Thr-749' by IKBKB. Interacts with ICOS; this interaction is critical for the maturation of T follicular regulatory cells. Interacts with RNF144B; this interaction prevents TBK1 phosphorylation and subsequent activation. Interacts with ASB8; this interaction promotes TBK1 proteasomal degradation. Forms a ternary complex with ZNF268 and SETD4; the interaction with SETD4 is ZNF268-dependent and leads to TBK1 monomethylation, which enhances its interaction with IRF3 and MAVS. (Microbial infection) Interacts with Borna disease virus (BDV) P protein leading to its phosphorylation. In terms of assembly, (Microbial infection) Interacts with Ebola virus protein VP35. As to quaternary structure, (Microbial infection) Interacts with HCV NS3; this interaction leads to inhibition of cellular antiviral response by blocking necessary interactions between the TBK1 and its substrates IRF3 and IRF7. (Microbial infection) Interacts with human herpesvirus 1 protein ICP34.5. In terms of assembly, (Microbial infection) Interacts with Zika virus non-structural protein 1/NS1 and non-structural protein 4B/NS4B. As to quaternary structure, (Microbial infection) Interacts with SARS-CoV-2 non-structural protein 6; this interaction decreases IRF3 phosphorylation by 57%, which leads to reduced IFN-beta (IFNB) production. Interacts with SARS-CoV-2 helicase; this interaction inhibits TBK1 phosphorylation and decreases IRF3 phosphorylation by 75%, which leads to reduced IFN-beta production. Interacts with SARS-CoV-2 M protein; the interaction promotes TBK1 degradation via 'Lys-48'-linked ubiquitination. (Microbial infection) Interacts with human cytomegalovirus protein UL35; this interaction inhibits type I interferon production. In terms of assembly, (Microbial infection) Interacts with heartland virus NSs; this interaction antagonizes TBK1 phosphorylation and inhibits TBK1-IRF3 interaction and thus the establishment of an antiviral state. As to quaternary structure, (Microbial infection) Interacts (via N-terminus) with Severe fever with thrombocytopenia virus (SFTSV) NSs; this interaction antagonizes TBK1 phosphorylation and sequesters TBK1 in NSs-induced cytoplasmic inclusion bodies thereby inhibiting the IFN responses. Autophosphorylation at Ser-172 activates the kinase, and is an essential step for virus-triggered signaling. Phosphorylated by IKBKB/IKKB at Ser-172. Phosphorylation requires homodimerization and ubiquitination at Lys-30 and Lys-401. Dephosphorylated at Ser-172 by PPM1B and this negatively regulates its role in mediating antiviral response. Post-translationally, 'Lys-63'-linked polyubiquitination by MIB1 after RNA virus infection, or by NRDP1 after LPS stimulation at Lys-30 and Lys-401, participates in kinase activation. 'Lys-48'-linked polyubiquitination at Lys-670 by DTX4 leads to proteasomal degradation. 'Lys-48'-linked polyubiquitination by TRAIP also leads to proteasomal degradation. 'Lys-48'-linked polyubiquitination by TRAF7; leading to proteasomal degradation. 'Lys-63'-linked polyubiquitination by RNF128 at Lys-30 and Lys-401 leads to the activation of antiviral responses. 'Lys-48'-linked polyubiquitination after 'lys-33'-linked deubiquitination by USP38 promotes TBK1 degradation. In terms of processing, (Microbial infection) Interaction with SARS-CoV-2 M protein induces 'Lys-48'-linked ubiquitination which leads to proteasomal degradation. (Microbial infection) Deubiquitinated by Epstein-Barr virus BPLF1 on both 'Lys-48' and 'Lys-63'-linked ubiquitin chains; leading to inhibition of type I interfewron production. Post-translationally, monomethylation at Lys-607 by SETD4 maximizes TBK1 activation and promotes efficient interferon signaling. In terms of tissue distribution, ubiquitous with higher expression in testis. Expressed in the ganglion cells, nerve fiber layer and microvasculature of the retina.

It localises to the cytoplasm. It carries out the reaction L-seryl-[protein] + ATP = O-phospho-L-seryl-[protein] + ADP + H(+). It catalyses the reaction L-threonyl-[protein] + ATP = O-phospho-L-threonyl-[protein] + ADP + H(+). Serine/threonine kinase that plays an essential role in regulating inflammatory responses to foreign agents. Following activation of toll-like receptors by viral or bacterial components, associates with TRAF3 and TANK and phosphorylates interferon regulatory factors (IRFs) IRF3 and IRF7 as well as DDX3X. This activity allows subsequent homodimerization and nuclear translocation of the IRFs leading to transcriptional activation of pro-inflammatory and antiviral genes including IFNA and IFNB. In order to establish such an antiviral state, TBK1 form several different complexes whose composition depends on the type of cell and cellular stimuli. Plays a key role in IRF3 activation: acts by first phosphorylating innate adapter proteins MAVS, STING1 and TICAM1 on their pLxIS motif, leading to recruitment of IRF3, thereby licensing IRF3 for phosphorylation by TBK1. Phosphorylated IRF3 dissociates from the adapter proteins, dimerizes, and then enters the nucleus to induce expression of interferons. Thus, several scaffolding molecules including FADD, TRADD, MAVS, AZI2, TANK or TBKBP1/SINTBAD can be recruited to the TBK1-containing-complexes. Under particular conditions, functions as a NF-kappa-B effector by phosphorylating NF-kappa-B inhibitor alpha/NFKBIA, IKBKB or RELA to translocate NF-Kappa-B to the nucleus. Restricts bacterial proliferation by phosphorylating the autophagy receptor OPTN/Optineurin on 'Ser-177', thus enhancing LC3 binding affinity and antibacterial autophagy. Phosphorylates SMCR8 component of the C9orf72-SMCR8 complex, promoting autophagosome maturation. Phosphorylates ATG8 proteins MAP1LC3C and GABARAPL2, thereby preventing their delipidation and premature removal from nascent autophagosomes. Seems to play a role in energy balance regulation by sustaining a state of chronic, low-grade inflammation in obesity, which leads to a negative impact on insulin sensitivity. Attenuates retroviral budding by phosphorylating the endosomal sorting complex required for transport-I (ESCRT-I) subunit VPS37C. Phosphorylates Borna disease virus (BDV) P protein. Plays an essential role in the TLR3- and IFN-dependent control of herpes virus HSV-1 and HSV-2 infections in the central nervous system. Acts both as a positive and negative regulator of the mTORC1 complex, depending on the context: activates mTORC1 in response to growth factors by catalyzing phosphorylation of MTOR, while it limits the mTORC1 complex by promoting phosphorylation of RPTOR. Acts as a positive regulator of the mTORC2 complex by mediating phosphorylation of MTOR, leading to increased phosphorylation and activation of AKT1. Phosphorylates and activates AKT1. Involved in the regulation of TNF-induced RIPK1-mediated cell death, probably acting via CYLD phosphorylation that in turn controls RIPK1 ubiquitination status. Also participates in the differentiation of T follicular regulatory cells together with the receptor ICOS. The protein is Serine/threonine-protein kinase TBK1 of Homo sapiens (Human).